A 1276-amino-acid polypeptide reads, in one-letter code: cGMP-specific 3',5'-cyclic phosphodiesterase (1276 aa).

Disordered regions lie at residues 1 to 76 (MHEL…TAAG), 91 to 185 (NQVK…QQDV), and 241 to 260 (ASPT…SASS). Low complexity-rich tracts occupy residues 12–47 (SSSS…SSAS) and 57–76 (TSTA…TAAG). The span at 109 to 124 (APYPPVPAAKPKPTPT) shows a compositional bias: pro residues. The span at 129–140 (SKFKSTSREVDV) shows a compositional bias: basic and acidic residues. Polar residues predominate over residues 147-166 (ARSSTISPGVSIHTQTIQQE). 2 stretches are compositionally biased toward low complexity: residues 167-180 (SSSA…SSSS) and 249-260 (SPRSLSNSSASS). GAF domains are found at residues 290–442 (DIDV…GIGI) and 474–658 (NLEC…GLGI). Residues 688–1119 (SQDQTEKLTQ…RNWQDLAEKV (432 aa)) form the PDEase domain. Catalysis depends on His-764, which acts as the Proton donor. Residues His-768, His-804, Asp-805, and Asp-1023 each coordinate a divalent metal cation. Disordered regions lie at residues 1162-1193 (AQHG…TGAL) and 1205-1276 (LYNS…CSLL). 2 stretches are compositionally biased toward basic and acidic residues: residues 1171-1180 (DDSHTPEHQR) and 1221-1233 (LESH…DDKS). The segment covering 1248–1263 (GRMSASSSTSSAGTVV) has biased composition (low complexity). Positions 1266-1276 (SKKRSKLCSLL) are enriched in basic residues. A Cysteine methyl ester modification is found at Cys-1273. A lipid anchor (S-farnesyl cysteine) is attached at Cys-1273. Positions 1274-1276 (SLL) are cleaved as a propeptide — removed in mature form.

It belongs to the cyclic nucleotide phosphodiesterase family. Interacts with PrBP. It depends on a divalent metal cation as a cofactor.

Its subcellular location is the cell membrane. The catalysed reaction is 3',5'-cyclic GMP + H2O = GMP + H(+). In terms of biological role, has a role regulating cGMP transport in Malpighian tubule principal cells. In Drosophila persimilis (Fruit fly), this protein is cGMP-specific 3',5'-cyclic phosphodiesterase.